The following is a 540-amino-acid chain: Glucose-6-phosphate isomerase (540 aa).

Glu-350 serves as the catalytic Proton donor. Residues His-381 and Lys-503 contribute to the active site.

This sequence belongs to the GPI family.

The protein localises to the cytoplasm. The enzyme catalyses alpha-D-glucose 6-phosphate = beta-D-fructose 6-phosphate. It functions in the pathway carbohydrate biosynthesis; gluconeogenesis. It participates in carbohydrate degradation; glycolysis; D-glyceraldehyde 3-phosphate and glycerone phosphate from D-glucose: step 2/4. Its function is as follows. Catalyzes the reversible isomerization of glucose-6-phosphate to fructose-6-phosphate. In Burkholderia ambifaria (strain MC40-6), this protein is Glucose-6-phosphate isomerase.